Reading from the N-terminus, the 77-residue chain is Small ribosomal subunit protein bS18 (77 aa).

The protein belongs to the bacterial ribosomal protein bS18 family. In terms of assembly, part of the 30S ribosomal subunit. Forms a tight heterodimer with protein bS6.

Its function is as follows. Binds as a heterodimer with protein bS6 to the central domain of the 16S rRNA, where it helps stabilize the platform of the 30S subunit. The chain is Small ribosomal subunit protein bS18 from Desulforamulus reducens (strain ATCC BAA-1160 / DSM 100696 / MI-1) (Desulfotomaculum reducens).